The primary structure comprises 353 residues: Guanine nucleotide-binding protein subunit alpha (353 aa).

The disordered stretch occupies residues 1–25 (MGCGMSTEDKEGKARNEEIENQLKR). Gly2 carries N-myristoyl glycine lipidation. Cys3 is lipidated: S-palmitoyl cysteine. A compositionally biased stretch (basic and acidic residues) spans 7-25 (TEDKEGKARNEEIENQLKR). The G-alpha domain maps to 32-353 (NEIKMLLLGA…QENLRLCGLI (322 aa)). Positions 35-48 (KMLLLGAGESGKST) are G1 motif. Positions 43, 44, 45, 46, 47, 48, 150, 175, 181, 203, 269, 270, 272, and 325 each coordinate GTP. Ser47 serves as a coordination point for Mg(2+). The segment at 173 to 181 (DVLRSRVKT) is G2 motif. Thr181 contacts Mg(2+). The tract at residues 196–205 (YRMFDVGGQR) is G3 motif. Residues 265–272 (ILFLNKID) form a G4 motif region. The tract at residues 323–328 (TCATDT) is G5 motif.

It belongs to the G-alpha family. G(q) subfamily. G proteins are composed of 3 units; alpha, beta and gamma. The alpha chain contains the guanine nucleotide binding site. Requires Mg(2+) as cofactor.

Functionally, guanine nucleotide-binding proteins (G proteins) are involved as modulators or transducers in various transmembrane signaling systems. In Colletotrichum trifolii, this protein is Guanine nucleotide-binding protein subunit alpha (CTG1).